The chain runs to 313 residues: Probable F-box protein At3g44130 (313 aa).

The F-box domain occupies 1–46; the sequence is MASGNLPWELEEEILCRLPLGSLVRLRSVCKHWNDFFNDKWFIKKS.

In Arabidopsis thaliana (Mouse-ear cress), this protein is Probable F-box protein At3g44130.